We begin with the raw amino-acid sequence, 424 residues long: uncharacterized protein (424 aa).

This is an uncharacterized protein from Orgyia pseudotsugata (Douglas-fir tussock moth).